Consider the following 117-residue polypeptide: MGNSFRVDRVGMEIKREVNEILQKKVRDPRVQNVTITDVQMLGDLSAAKVFYTIHSTLASDNQKAQTGLEKATGTIKRELGKNLTMYKIPDLIFIKDESIEYGNKIDEMLRNLERKD.

Belongs to the RbfA family. In terms of assembly, monomer. Binds 30S ribosomal subunits, but not 50S ribosomal subunits or 70S ribosomes.

The protein localises to the cytoplasm. In terms of biological role, one of several proteins that assist in the late maturation steps of the functional core of the 30S ribosomal subunit. Associates with free 30S ribosomal subunits (but not with 30S subunits that are part of 70S ribosomes or polysomes). Required for efficient processing of 16S rRNA. May interact with the 5'-terminal helix region of 16S rRNA. This is Ribosome-binding factor A from Streptococcus thermophilus (strain CNRZ 1066).